The sequence spans 358 residues: Type II restriction enzyme HpaII (358 aa).

In terms of assembly, homodimer.

It catalyses the reaction Endonucleolytic cleavage of DNA to give specific double-stranded fragments with terminal 5'-phosphates.. Functionally, an E and P subtype restriction enzyme that recognizes the double-stranded sequence 5'-CCGG-3' and cleaves after C-1. This chain is Type II restriction enzyme HpaII, found in Haemophilus parainfluenzae.